Reading from the N-terminus, the 182-residue chain is Ribosome maturation factor RimP (182 aa).

This sequence belongs to the RimP family.

Its subcellular location is the cytoplasm. Functionally, required for maturation of 30S ribosomal subunits. This chain is Ribosome maturation factor RimP, found in Corynebacterium efficiens (strain DSM 44549 / YS-314 / AJ 12310 / JCM 11189 / NBRC 100395).